A 392-amino-acid polypeptide reads, in one-letter code: Extracellular metalloproteinase 4 (392 aa).

Positions 1 to 9 (VHSVVDYVS) are excised as a propeptide. N-linked (GlcNAc...) asparagine glycosylation is present at asparagine 176. Zn(2+) is bound at residue histidine 193. The active site involves glutamate 194. Residue histidine 197 coordinates Zn(2+). Residues asparagine 359 and asparagine 385 are each glycosylated (N-linked (GlcNAc...) asparagine).

Belongs to the peptidase M36 family. Zn(2+) is required as a cofactor.

It localises to the secreted. Its function is as follows. Secreted metalloproteinase probably acting as a virulence factor. In Trichophyton soudanense, this protein is Extracellular metalloproteinase 4 (MEP4).